The sequence spans 468 residues: ATP synthase subunit beta (468 aa).

155 to 162 (GGAGVGKT) is an ATP binding site.

The protein belongs to the ATPase alpha/beta chains family. In terms of assembly, F-type ATPases have 2 components, CF(1) - the catalytic core - and CF(0) - the membrane proton channel. CF(1) has five subunits: alpha(3), beta(3), gamma(1), delta(1), epsilon(1). CF(0) has three main subunits: a(1), b(2) and c(9-12). The alpha and beta chains form an alternating ring which encloses part of the gamma chain. CF(1) is attached to CF(0) by a central stalk formed by the gamma and epsilon chains, while a peripheral stalk is formed by the delta and b chains.

The protein resides in the cell inner membrane. It catalyses the reaction ATP + H2O + 4 H(+)(in) = ADP + phosphate + 5 H(+)(out). In terms of biological role, produces ATP from ADP in the presence of a proton gradient across the membrane. The catalytic sites are hosted primarily by the beta subunits. The chain is ATP synthase subunit beta from Thermotoga neapolitana (strain ATCC 49049 / DSM 4359 / NBRC 107923 / NS-E).